Here is a 555-residue protein sequence, read N- to C-terminus: NAD-dependent protein deacetylase sirtuin-1 (555 aa).

The Nuclear localization signal signature appears at 39-46 (PPKRKKRK). A Deacetylase sirtuin-type domain is found at 44–304 (KRKDINTIED…NELCHRLGGE (261 aa)). K46 is subject to N6-acetyllysine. A required for interaction with the sumoylated form of CCAR2 region spans residues 64–67 (IIVL). Residues 69–88 (GAGV…DGIY) and 153–156 (QNID) each bind NAD(+). The active-site Proton acceptor is H171. Positions 179 and 182 each coordinate Zn(2+). The residue at position 185 (K185) is an N6-acetyllysine. Zn(2+) contacts are provided by C203 and C206. Residues C203 and C206 each carry the S-nitrosocysteine modification. K238 carries the N6-acetyllysine modification. The Nuclear export signal signature appears at 241-247 (VDLLIVI). NAD(+)-binding positions include 248 to 250 (GSS), 273 to 275 (NRE), and C290. Residue K321 is modified to N6-acetyllysine. The tract at residues 335 to 354 (LPPTPLHISEDSSSPERTVP) is disordered. Position 338 is a phosphothreonine (T338). S343 carries the post-translational modification Phosphoserine. Positions 345-354 (DSSSPERTVP) are enriched in polar residues. A Phosphothreonine modification is found at T352. K417 is modified (N6-acetyllysine). S466 and S468 each carry phosphoserine. Residues 469–529 (EDDALSSSSC…GGSGADGGDQ (61 aa)) form a disordered region. Positions 473 to 493 (LSSSSCGSNSDSGTCQSPSLE) are enriched in low complexity. Acidic residues predominate over residues 494-514 (EPLEDESEIEEFYNGLEDDAD). S552 carries the post-translational modification Phosphoserine.

The protein belongs to the sirtuin family. Class I subfamily. In terms of assembly, interacts with XBP1 isoform 2. Found in a complex with PCAF and MYOD1. Interacts with FOXO1; the interaction deacetylates FOXO1, resulting in its nuclear retention and promotion of its transcriptional activity Component of the eNoSC complex, composed of SIRT1, SUV39H1 and RRP8. Interacts with HES1, HEY2 and PML. Interacts with RPS19BP1/AROS. Interacts with CCAR2 (via N-terminus); the interaction disrupts the interaction between SIRT1 and p53/TP53. Interacts with SETD7; the interaction induces the dissociation of SIRT1 from p53/TP53 and increases p53/TP53 activity. Interacts with MYCN, NR1I2, CREBZF, TSC2, TLE1, FOS, JUN, NR0B2, PPARG, NCOR, IRS1, IRS2 and NMNAT1. Interacts with HNF1A; the interaction occurs under nutrient restriction. Interacts with SUZ12; the interaction mediates the association with the PRC4 histone methylation complex which is specific as an association with PCR2 and PCR3 complex variants is not found. Interacts with HIV-1 tat. Interacts with BCL6; leads to a epigenetic repression of specific target genes. Interacts with CLOCK, BMAL1 and PER2. Interacts with PPARA; the interaction seems to be modulated by NAD(+) levels. Interacts with NR1H3 and this interaction is inhibited in the presence of CCAR2. Interacts with CHEK2. Interacts with p53/TP53. Exhibits a preferential interaction with sumoylated CCAR2 over its unmodified form. Interacts with PACS2. Interacts with SIRT7. Interacts with PUS7. Interacts with TULP3. Interacts with MORN3; the interaction enhances the ubiquitination of p53/TP53. Zn(2+) serves as cofactor. In terms of processing, methylated on multiple lysine residues; methylation is enhanced after DNA damage and is dispensable for deacetylase activity toward p53/TP53. Phosphorylated. Phosphorylated by STK4/MST1, resulting in inhibition of SIRT1-mediated p53/TP53 deacetylation. Phosphorylation by MAPK8/JNK1 at Thr-338 leads to increased nuclear localization and enzymatic activity. Phosphorylation at Thr-338 by DYRK1A and DYRK3 activates deacetylase activity and promotes cell survival. Phosphorylated by CaMK2, leading to increased p53/TP53 and NF-kappa-B p65/RELA deacetylation activity. Post-translationally, S-nitrosylated by GAPDH, leading to inhibit the NAD-dependent protein deacetylase activity. In terms of processing, acetylated at various Lys residues. Deacetylated via an autocatalytic mechanism. Autodeacetylation at Lys-46 promotes its protein deacetylase activity. Ubiquitinated; leading to degradation. Deubiquitinated by USP22; leading to stabilization.

It localises to the nucleus. It is found in the PML body. Its subcellular location is the cytoplasm. It carries out the reaction N(6)-acetyl-L-lysyl-[protein] + NAD(+) + H2O = 2''-O-acetyl-ADP-D-ribose + nicotinamide + L-lysyl-[protein]. The catalysed reaction is N(6)-propanoyl-L-lysyl-[protein] + NAD(+) + H2O = 3''-O-propanoyl-ADP-D-ribose + nicotinamide + L-lysyl-[protein]. The enzyme catalyses N(6)-(2E)-butenoyl-L-lysyl-[protein] + NAD(+) + H2O = 2''-O-(2E)-but-2-enoyl-ADP-D-ribose + nicotinamide + L-lysyl-[protein]. Inhibited by nicotinamide. Activated by resveratrol (3,5,4'-trihydroxy-trans-stilbene), butein (3,4,2',4'-tetrahydroxychalcone), piceatannol (3,5,3',4'-tetrahydroxy-trans-stilbene), Isoliquiritigenin (4,2',4'-trihydroxychalcone), fisetin (3,7,3',4'-tetrahydroxyflavone) and quercetin (3,5,7,3',4'-pentahydroxyflavone). MAPK8/JNK1 and RPS19BP1/AROS act as positive regulators of deacetylation activity. Negatively regulated by CCAR2. Its function is as follows. NAD-dependent protein deacetylase that links transcriptional regulation directly to intracellular energetics and participates in the coordination of several separated cellular functions such as cell cycle, response to DNA damage, metabolism, apoptosis and autophagy. Can modulate chromatin function through deacetylation of histones and can promote alterations in the methylation of histones and DNA, leading to transcriptional repression. Deacetylates a broad range of transcription factors and coregulators, thereby regulating target gene expression positively and negatively. Serves as a sensor of the cytosolic ratio of NAD(+)/NADH which is altered by glucose deprivation and metabolic changes associated with caloric restriction. Is essential in skeletal muscle cell differentiation and in response to low nutrients mediates the inhibitory effect on skeletal myoblast differentiation which also involves 5'-AMP-activated protein kinase (AMPK) and nicotinamide phosphoribosyltransferase (NAMPT). Component of the eNoSC (energy-dependent nucleolar silencing) complex, a complex that mediates silencing of rDNA in response to intracellular energy status and acts by recruiting histone-modifying enzymes. The eNoSC complex is able to sense the energy status of cell: upon glucose starvation, elevation of NAD(+)/NADP(+) ratio activates SIRT1, leading to histone H3 deacetylation followed by dimethylation of H3 at 'Lys-9' (H3K9me2) by SUV39H1 and the formation of silent chromatin in the rDNA locus. Deacetylates 'Lys-266' of SUV39H1, leading to its activation. Inhibits skeletal muscle differentiation by deacetylating PCAF and MYOD1. Deacetylates H2A and 'Lys-26' of H1-4. Deacetylates 'Lys-16' of histone H4 (in vitro). Involved in NR0B2/SHP corepression function through chromatin remodeling: Recruited to LRH1 target gene promoters by NR0B2/SHP thereby stimulating histone H3 and H4 deacetylation leading to transcriptional repression. Proposed to contribute to genomic integrity via positive regulation of telomere length; however, reports on localization to pericentromeric heterochromatin are conflicting. Proposed to play a role in constitutive heterochromatin (CH) formation and/or maintenance through regulation of the available pool of nuclear SUV39H1. Upon oxidative/metabolic stress decreases SUV39H1 degradation by inhibiting SUV39H1 polyubiquitination by MDM2. This increase in SUV39H1 levels enhances SUV39H1 turnover in CH, which in turn seems to accelerate renewal of the heterochromatin which correlates with greater genomic integrity during stress response. Deacetylates 'Lys-382' of p53/TP53 and impairs its ability to induce transcription-dependent proapoptotic program and modulate cell senescence. Deacetylates TAF1B and thereby represses rDNA transcription by the RNA polymerase I. Deacetylates MYC, promotes the association of MYC with MAX and decreases MYC stability leading to compromised transformational capability. Deacetylates FOXO3 in response to oxidative stress thereby increasing its ability to induce cell cycle arrest and resistance to oxidative stress but inhibiting FOXO3-mediated induction of apoptosis transcriptional activity; also leading to FOXO3 ubiquitination and protesomal degradation. Appears to have a similar effect on MLLT7/FOXO4 in regulation of transcriptional activity and apoptosis. Deacetylates DNMT1; thereby impairs DNMT1 methyltransferase-independent transcription repressor activity, modulates DNMT1 cell cycle regulatory function and DNMT1-mediated gene silencing. Deacetylates RELA/NF-kappa-B p65 thereby inhibiting its transactivating potential and augments apoptosis in response to TNF-alpha. Deacetylates HIF1A, KAT5/TIP60, RB1 and HIC1. Deacetylates FOXO1 resulting in its nuclear retention and enhancement of its transcriptional activity leading to increased gluconeogenesis in liver. Inhibits E2F1 transcriptional activity and apoptotic function, possibly by deacetylation. Involved in HES1- and HEY2-mediated transcriptional repression. In cooperation with MYCN seems to be involved in transcriptional repression of DUSP6/MAPK3 leading to MYCN stabilization by phosphorylation at 'Ser-62'. Deacetylates MEF2D. Required for antagonist-mediated transcription suppression of AR-dependent genes which may be linked to local deacetylation of histone H3. Represses HNF1A-mediated transcription. Required for the repression of ESRRG by CREBZF. Deacetylates NR1H3 AND NR1H2 and deacetylation of NR1H3 at 'Lys-434' positively regulates transcription of NR1H3:RXR target genes, promotes NR1H3 proteasomal degradation and results in cholesterol efflux; a promoter clearing mechanism after reach round of transcription is proposed. Involved in lipid metabolism: deacetylates LPIN1, thereby inhibiting diacylglycerol synthesis. Implicated in regulation of adipogenesis and fat mobilization in white adipocytes by repression of PPARG which probably involves association with NCOR1 and SMRT/NCOR2. Deacetylates p300/EP300 and PRMT1. Deacetylates ACSS2 leading to its activation, and HMGCS1 deacetylation. Involved in liver and muscle metabolism. Through deacetylation and activation of PPARGC1A is required to activate fatty acid oxidation in skeletal muscle under low-glucose conditions and is involved in glucose homeostasis. Involved in regulation of PPARA and fatty acid beta-oxidation in liver. Involved in positive regulation of insulin secretion in pancreatic beta cells in response to glucose; the function seems to imply transcriptional repression of UCP2. Proposed to deacetylate IRS2 thereby facilitating its insulin-induced tyrosine phosphorylation. Deacetylates SREBF1 isoform SREBP-1C thereby decreasing its stability and transactivation in lipogenic gene expression. Involved in DNA damage response by repressing genes which are involved in DNA repair, such as XPC and TP73, deacetylating XRCC6/Ku70, and facilitating recruitment of additional factors to sites of damaged DNA, such as SIRT1-deacetylated NBN can recruit ATM to initiate DNA repair and SIRT1-deacetylated XPA interacts with RPA2. Also involved in DNA repair of DNA double-strand breaks by homologous recombination and specifically single-strand annealing independently of XRCC6/Ku70 and NBN. Promotes DNA double-strand breaks by mediating deacetylation of SIRT6. Transcriptional suppression of XPC probably involves an E2F4:RBL2 suppressor complex and protein kinase B (AKT) signaling. Transcriptional suppression of TP73 probably involves E2F4 and PCAF. Deacetylates WRN thereby regulating its helicase and exonuclease activities and regulates WRN nuclear translocation in response to DNA damage. Deacetylates APEX1 at 'Lys-6' and 'Lys-7' and stimulates cellular AP endonuclease activity by promoting the association of APEX1 to XRCC1. Catalyzes deacetylation of ERCC4/XPF, thereby impairing interaction with ERCC1 and nucleotide excision repair (NER). Increases p53/TP53-mediated transcription-independent apoptosis by blocking nuclear translocation of cytoplasmic p53/TP53 and probably redirecting it to mitochondria. Deacetylates XRCC6/Ku70 at 'Lys-539' and 'Lys-542' causing it to sequester BAX away from mitochondria thereby inhibiting stress-induced apoptosis. Is involved in autophagy, presumably by deacetylating ATG5, ATG7 and MAP1LC3B/ATG8. Deacetylates AKT1 which leads to enhanced binding of AKT1 and PDK1 to PIP3 and promotes their activation. Proposed to play role in regulation of STK11/LBK1-dependent AMPK signaling pathways implicated in cellular senescence which seems to involve the regulation of the acetylation status of STK11/LBK1. Can deacetylate STK11/LBK1 and thereby increase its activity, cytoplasmic localization and association with STRAD; however, the relevance of such activity in normal cells is unclear. In endothelial cells is shown to inhibit STK11/LBK1 activity and to promote its degradation. Deacetylates SMAD7 at 'Lys-64' and 'Lys-70' thereby promoting its degradation. Deacetylates CIITA and augments its MHC class II transactivation and contributes to its stability. Deacetylates MECOM/EVI1. Deacetylates PML at 'Lys-487' and this deacetylation promotes PML control of PER2 nuclear localization. During the neurogenic transition, represses selective NOTCH1-target genes through histone deacetylation in a BCL6-dependent manner and leading to neuronal differentiation. Regulates the circadian expression of several core clock genes, including BMAL1, RORC, PER2 and CRY1 and plays a critical role in maintaining a controlled rhythmicity in histone acetylation, thereby contributing to circadian chromatin remodeling. Deacetylates BMAL1 and histones at the circadian gene promoters in order to facilitate repression by inhibitory components of the circadian oscillator. Deacetylates PER2, facilitating its ubiquitination and degradation by the proteasome. Protects cardiomyocytes against palmitate-induced apoptosis. Deacetylates XBP1 isoform 2; deacetylation decreases protein stability of XBP1 isoform 2 and inhibits its transcriptional activity. Deacetylates PCK1 and directs its activity toward phosphoenolpyruvate production promoting gluconeogenesis. Involved in the CCAR2-mediated regulation of PCK1 and NR1D1. Deacetylates CTNB1 at 'Lys-49'. In POMC (pro-opiomelanocortin) neurons, required for leptin-induced activation of PI3K signaling. In addition to protein deacetylase activity, also acts as a protein-lysine deacylase by mediating protein depropionylation and decrotonylation. Mediates depropionylation of Osterix (SP7). Catalyzes decrotonylation of histones; it however does not represent a major histone decrotonylase. Deacetylates SOX9; promoting SOX9 nuclear localization and transactivation activity. Involved in the regulation of centrosome duplication. Deacetylates CENATAC in G1 phase, allowing for SASS6 accumulation on the centrosome and subsequent procentriole assembly. Deacetylates NDC80/HEC1. The polypeptide is NAD-dependent protein deacetylase sirtuin-1 (Rattus norvegicus (Rat)).